Reading from the N-terminus, the 344-residue chain is Selenide, water dikinase (344 aa).

The active site involves Sec-16. Position 16 (Sec-16) is a non-standard amino acid, selenocysteine. Residues Lys-19 and 46-48 (TND) contribute to the ATP site. Residue Asp-49 coordinates Mg(2+). Residues Asp-66, Asp-89, and 135–137 (GHT) contribute to the ATP site. Residue Asp-89 coordinates Mg(2+). Asp-223 is a Mg(2+) binding site.

The protein belongs to the selenophosphate synthase 1 family. Class I subfamily. In terms of assembly, homodimer. Mg(2+) serves as cofactor.

The catalysed reaction is hydrogenselenide + ATP + H2O = selenophosphate + AMP + phosphate + 2 H(+). Synthesizes selenophosphate from selenide and ATP. This chain is Selenide, water dikinase, found in Caldanaerobacter subterraneus subsp. tengcongensis (strain DSM 15242 / JCM 11007 / NBRC 100824 / MB4) (Thermoanaerobacter tengcongensis).